A 142-amino-acid chain; its full sequence is Neuritin (142 aa).

The N-terminal stretch at 1 to 27 (MGLTLSGRYISLFLAVQIAYLLQAVRA) is a signal peptide. Ala-112 is lipidated: GPI-anchor amidated alanine. Residues 113-142 (GGNGAIRSSVPFGVTLLITALSALVTWMQF) constitute a propeptide, removed in mature form.

It belongs to the neuritin family.

The protein localises to the cell membrane. The protein resides in the synapse. Its function is as follows. Modulates postsynaptic dendritic arbor elaboration and synaptic maturation. This is Neuritin (nrn1) from Danio rerio (Zebrafish).